The primary structure comprises 295 residues: GTPase Era (295 aa).

One can recognise an Era-type G domain in the interval 7 to 176 (KTVSVCIIGR…ITSKAKIAPW (170 aa)). The segment at 15–22 (GRPNSGKS) is G1. 15 to 22 (GRPNSGKS) is a binding site for GTP. Residues 41–45 (QTTRS) form a G2 region. Residues 62 to 65 (DTPG) are G3. Residues 62–66 (DTPGI) and 124–127 (NKID) contribute to the GTP site. The segment at 124-127 (NKID) is G4. Residues 152 to 154 (ISA) are G5. A KH type-2 domain is found at 204–281 (LQQELPYKLT…HLFLFVKVRE (78 aa)).

This sequence belongs to the TRAFAC class TrmE-Era-EngA-EngB-Septin-like GTPase superfamily. Era GTPase family. As to quaternary structure, monomer.

Its subcellular location is the cytoplasm. The protein resides in the cell inner membrane. Functionally, an essential GTPase that binds both GDP and GTP, with rapid nucleotide exchange. Plays a role in 16S rRNA processing and 30S ribosomal subunit biogenesis and possibly also in cell cycle regulation and energy metabolism. The protein is GTPase Era of Rickettsia bellii (strain OSU 85-389).